Reading from the N-terminus, the 131-residue chain is Small ribosomal subunit protein uS10m (131 aa).

Belongs to the universal ribosomal protein uS10 family.

The protein localises to the mitochondrion. The polypeptide is Small ribosomal subunit protein uS10m (mrps10) (Dictyostelium discoideum (Social amoeba)).